Reading from the N-terminus, the 243-residue chain is Probable septum site-determining protein MinC (243 aa).

This sequence belongs to the MinC family. As to quaternary structure, interacts with MinD and FtsZ.

Cell division inhibitor that blocks the formation of polar Z ring septums. Rapidly oscillates between the poles of the cell to destabilize FtsZ filaments that have formed before they mature into polar Z rings. Prevents FtsZ polymerization. The sequence is that of Probable septum site-determining protein MinC from Agathobacter rectalis (strain ATCC 33656 / DSM 3377 / JCM 17463 / KCTC 5835 / VPI 0990) (Eubacterium rectale).